A 169-amino-acid chain; its full sequence is Allophycocyanin subunit beta-18 (169 aa).

Position 72 is an N4-methylasparagine (asparagine 72). Residue cysteine 82 coordinates (2R,3E)-phycocyanobilin.

Belongs to the phycobiliprotein family. Heterodimer of an alpha and a beta chain. Post-translationally, contains one covalently linked bilin chromophore.

It localises to the plastid. Its subcellular location is the chloroplast thylakoid membrane. Functionally, light-harvesting photosynthetic bile pigment-protein from the phycobiliprotein complex. Allophycocyanin has a maximum absorption at approximately 650 nanometers. The polypeptide is Allophycocyanin subunit beta-18 (apcF) (Pyropia yezoensis (Susabi-nori)).